Consider the following 219-residue polypeptide: Ribose-5-phosphate isomerase A (219 aa).

Substrate-binding positions include 28–31 (SGST), 81–84 (DGAD), and 94–97 (KGGG). The active-site Proton acceptor is glutamate 103. Lysine 121 serves as a coordination point for substrate.

Belongs to the ribose 5-phosphate isomerase family. Homodimer.

It catalyses the reaction aldehydo-D-ribose 5-phosphate = D-ribulose 5-phosphate. The protein operates within carbohydrate degradation; pentose phosphate pathway; D-ribose 5-phosphate from D-ribulose 5-phosphate (non-oxidative stage): step 1/1. Its function is as follows. Catalyzes the reversible conversion of ribose-5-phosphate to ribulose 5-phosphate. The polypeptide is Ribose-5-phosphate isomerase A (Pasteurella multocida (strain Pm70)).